Here is a 23-residue protein sequence, read N- to C-terminus: Acidic phospholipase A2 Cvv-E6c (23 aa).

Ca(2+) is required as a cofactor. Post-translationally, contains 7 disulfide bonds. As to expression, expressed by the venom gland.

It localises to the secreted. It catalyses the reaction a 1,2-diacyl-sn-glycero-3-phosphocholine + H2O = a 1-acyl-sn-glycero-3-phosphocholine + a fatty acid + H(+). In terms of biological role, snake venom phospholipase A2 (PLA2) that significantly inhibits ADP-induced platelet aggregation in platelet-rich plasma of human, rabbit and guinea pig. PLA2 catalyzes the calcium-dependent hydrolysis of the 2-acyl groups in 3-sn-phosphoglycerides. This Crotalus viridis viridis (Prairie rattlesnake) protein is Acidic phospholipase A2 Cvv-E6c.